We begin with the raw amino-acid sequence, 365 residues long: Spore germination protein A2 (365 aa).

11 helical membrane passes run 12–32 (TFQGISIVANTMLGAGLLTLP), 45–65 (WITLILEGFIFIFFIYLNTLI), 85–105 (WIGSIIGLLICGYFLGVASFE), 122–142 (PIQVIILTFICCGIYLMVGGL), 148–168 (LFPFYLTVTIIILLIVFGISF), 187–207 (IANSLTVVSISFLGMEVMLFL), 223–243 (LGFLIPIILYILTYIIVVGAL), 250–270 (TLIWPTISLFQSFELKGIFIE), 275–295 (FLLVVWIIQFFTTFVIYGYFA), 303–323 (FGLSTKTSMVIIGITVFYFSL), and 338–358 (LGYIFVSLFLLPFILFFIVAL).

This sequence belongs to the amino acid-polyamine-organocation (APC) superfamily. Spore germination protein (SGP) (TC 2.A.3.9) family.

It is found in the cell membrane. In terms of biological role, involved in the germinative response to L-alanine. Could be an amino acid transporter. Forms a complex at the inner spore membrane which acts as a receptor for L-alanine, thus is involved in the stimulation of germination in response to alanine. Can stimulate germination in the absence of gerD and gerK gene products (fructose and glucose receptors, respectively), but the response is improved in their presence. The chain is Spore germination protein A2 (gerAB) from Bacillus subtilis (strain 168).